Reading from the N-terminus, the 233-residue chain is MGCSGSKNASNPKDGAASKGGKDGKTTADRKVAWERIRCAIPRDKDAESKSRRIELFKQFDTNGTGKLGFREVLDGCYSILKLDEFTTHLPDIVQRAFDKAKDLGNKVKGVGEEDLVEFLEFRLMLCYIYDIFELTVIFDTMDKDGSLLLELHEFKEALPKLKEWGVDITDATTVFNEIDTNGSGVVTFDEFSCWAVTKKLQVSGDPDDEENGANEGDGANAGDGVPAAEGSA.

Residues 1–11 (MGCSGSKNASN) show a composition bias toward polar residues. The interval 1-29 (MGCSGSKNASNPKDGAASKGGKDGKTTAD) is disordered. Residues 20–29 (GGKDGKTTAD) are compositionally biased toward basic and acidic residues. 3 consecutive EF-hand domains span residues 48–83 (ESKS…ILKL), 130–165 (YDIF…LKEW), and 167–202 (VDIT…KKLQ). Aspartate 61, asparagine 63, threonine 65, lysine 67, glutamate 72, aspartate 143, aspartate 145, serine 147, glutamate 154, aspartate 180, asparagine 182, serine 184, and glutamate 191 together coordinate Ca(2+). The interval 203 to 233 (VSGDPDDEENGANEGDGANAGDGVPAAEGSA) is disordered. Residues 214–225 (ANEGDGANAGDG) are compositionally biased toward low complexity.

It belongs to the calflagin family.

Its subcellular location is the cell projection. The protein resides in the cilium. The protein localises to the flagellum. May contribute to the rapid motility of the trypanosomes, playing a role either in flagellar structure or in calcium metabolism. Could alternate between a GDP-bound inactive form to a calcium/GTP-bound active form. This is Flagellar calcium-binding protein TB-17 (FCABP) from Trypanosoma brucei brucei.